Consider the following 70-residue polypeptide: Large ribosomal subunit protein bL31c (70 aa).

This sequence belongs to the bacterial ribosomal protein bL31 family. Type A subfamily. Part of the 50S ribosomal subunit.

Its subcellular location is the plastid. It localises to the chloroplast. Its function is as follows. Binds the 23S rRNA. This Pyropia yezoensis (Susabi-nori) protein is Large ribosomal subunit protein bL31c.